Consider the following 221-residue polypeptide: Octanoyltransferase (221 aa).

Positions 35-221 constitute a BPL/LPL catalytic domain; sequence ESYENRIIFC…RELLAALLSK (187 aa). Residues 80–87, 152–154, and 165–167 contribute to the substrate site; these read RGGDITYH, AIG, and GLA. The active-site Acyl-thioester intermediate is the Cys-183.

This sequence belongs to the LipB family.

It is found in the cytoplasm. The catalysed reaction is octanoyl-[ACP] + L-lysyl-[protein] = N(6)-octanoyl-L-lysyl-[protein] + holo-[ACP] + H(+). It participates in protein modification; protein lipoylation via endogenous pathway; protein N(6)-(lipoyl)lysine from octanoyl-[acyl-carrier-protein]: step 1/2. Its function is as follows. Catalyzes the transfer of endogenously produced octanoic acid from octanoyl-acyl-carrier-protein onto the lipoyl domains of lipoate-dependent enzymes. Lipoyl-ACP can also act as a substrate although octanoyl-ACP is likely to be the physiological substrate. The polypeptide is Octanoyltransferase (Bacteroides fragilis (strain ATCC 25285 / DSM 2151 / CCUG 4856 / JCM 11019 / LMG 10263 / NCTC 9343 / Onslow / VPI 2553 / EN-2)).